Reading from the N-terminus, the 209-residue chain is Large ribosomal subunit protein uL3 (209 aa).

At Gln-150 the chain carries N5-methylglutamine.

Belongs to the universal ribosomal protein uL3 family. As to quaternary structure, part of the 50S ribosomal subunit. Forms a cluster with proteins L14 and L19. In terms of processing, methylated by PrmB.

One of the primary rRNA binding proteins, it binds directly near the 3'-end of the 23S rRNA, where it nucleates assembly of the 50S subunit. The protein is Large ribosomal subunit protein uL3 of Salmonella arizonae (strain ATCC BAA-731 / CDC346-86 / RSK2980).